We begin with the raw amino-acid sequence, 262 residues long: Octanoyltransferase (262 aa).

The BPL/LPL catalytic domain maps to Gly-60–Arg-248. Substrate contacts are provided by residues Arg-99–His-106, Ala-179–Gly-181, and Gly-192–Ser-194. Cys-210 serves as the catalytic Acyl-thioester intermediate.

This sequence belongs to the LipB family.

It is found in the cytoplasm. It carries out the reaction octanoyl-[ACP] + L-lysyl-[protein] = N(6)-octanoyl-L-lysyl-[protein] + holo-[ACP] + H(+). It functions in the pathway protein modification; protein lipoylation via endogenous pathway; protein N(6)-(lipoyl)lysine from octanoyl-[acyl-carrier-protein]: step 1/2. Catalyzes the transfer of endogenously produced octanoic acid from octanoyl-acyl-carrier-protein onto the lipoyl domains of lipoate-dependent enzymes. Lipoyl-ACP can also act as a substrate although octanoyl-ACP is likely to be the physiological substrate. This chain is Octanoyltransferase, found in Sinorhizobium medicae (strain WSM419) (Ensifer medicae).